The following is a 574-amino-acid chain: Probable glucomannan 4-beta-mannosyltransferase 6 (574 aa).

A helical transmembrane segment spans residues 87 to 107 (VVACMVMSVIVLAEKVFLGVV). The active site involves D180. Substrate-binding residues include D239 and D241. The active site involves D333. 4 helical membrane-spanning segments follow: residues 412 to 432 (IIST…KVFF), 437 to 457 (IPLW…SVGT), 523 to 543 (FHCL…YDYL), and 548 to 568 (IFYI…FEFM).

Belongs to the glycosyltransferase 2 family. Plant cellulose synthase-like A subfamily.

The protein localises to the golgi apparatus membrane. The enzyme catalyses GDP-mannose + (glucomannan)n = GDP + (glucomannan)n+1.. Functionally, probable mannan synthase which consists of a 4-beta-mannosyltransferase activity on mannan using GDP-mannose. The beta-1,4-mannan product is the backbone for galactomannan synthesis by galactomannan galactosyltransferase. Galactomannan is a noncellulosic polysaccharides of plant cell wall. The polypeptide is Probable glucomannan 4-beta-mannosyltransferase 6 (Oryza sativa subsp. japonica (Rice)).